We begin with the raw amino-acid sequence, 81 residues long: uncharacterized protein (81 aa).

A mitochondrion-targeting transit peptide spans 1 to 20 (MYSRVLSVAAIVTMALAVQA). The disordered stretch occupies residues 27 to 53 (YGNTTNSTGTTNGTNGTNTTTSSTATQ). Positions 28-53 (GNTTNSTGTTNGTNGTNTTTSSTATQ) are enriched in low complexity. The helical transmembrane segment at 59–79 (ITNFSSGAFVIAMIAVACSVM) threads the bilayer.

The protein resides in the mitochondrion membrane. This is an uncharacterized protein from Schizosaccharomyces pombe (strain 972 / ATCC 24843) (Fission yeast).